The sequence spans 546 residues: Chaperonin GroEL (546 aa).

ATP is bound by residues 29 to 32 (TMGP), Lys50, 86 to 90 (DGTTT), Gly414, and Asp492.

It belongs to the chaperonin (HSP60) family. In terms of assembly, forms a cylinder of 14 subunits composed of two heptameric rings stacked back-to-back. Interacts with the co-chaperonin GroES.

Its subcellular location is the cytoplasm. The catalysed reaction is ATP + H2O + a folded polypeptide = ADP + phosphate + an unfolded polypeptide.. Together with its co-chaperonin GroES, plays an essential role in assisting protein folding. The GroEL-GroES system forms a nano-cage that allows encapsulation of the non-native substrate proteins and provides a physical environment optimized to promote and accelerate protein folding. The sequence is that of Chaperonin GroEL from Helicobacter pylori (strain ATCC 700392 / 26695) (Campylobacter pylori).